The sequence spans 206 residues: Sclerostin domain-containing protein 1 (206 aa).

A signal peptide spans 1–23 (MLPPAIHLSLIPLLCILMRNCLA). The interval 42-62 (AHPSSNSTLNQARNGGRHFSS) is disordered. Residues 44–62 (PSSNSTLNQARNGGRHFSS) are compositionally biased toward polar residues. N-linked (GlcNAc...) asparagine glycosylation occurs at N47. Cystine bridges form between C75–C133, C89–C147, C100–C163, and C104–C165. The CTCK domain maps to 75–170 (CRELRSTKYI…TACKCKRYTR (96 aa)). N173 carries an N-linked (GlcNAc...) asparagine glycan. Residues 176 to 206 (SHNFESVSPAKPAQHHRERKRASKSSKHSLS) are disordered. The segment covering 188–206 (AQHHRERKRASKSSKHSLS) has biased composition (basic residues).

It belongs to the sclerostin family. Interacts with BMP2, BMP4, BMP6 and BMP7 with high affinity. In terms of tissue distribution, highly expressed in kidney at renal collecting ducts level and weakly in brain.

The protein resides in the secreted. May be involved in the onset of endometrial receptivity for implantation/sensitization for the decidual cell reaction. Enhances Wnt signaling and inhibits TGF-beta signaling. Directly antagonizes activity of BMP2, BMP4, BMP6 and BMP7 in a dose-dependent manner. In Mus musculus (Mouse), this protein is Sclerostin domain-containing protein 1 (Sostdc1).